Consider the following 425-residue polypeptide: UDP-N-acetyl-D-glucosamine 6-dehydrogenase (425 aa).

NAD(+)-binding residues include valine 17, aspartate 35, arginine 40, threonine 86, and threonine 121. Cysteine 261 (nucleophile) is an active-site residue. Arginine 332 contributes to the NAD(+) binding site.

The protein belongs to the UDP-glucose/GDP-mannose dehydrogenase family. Homotrimer.

The enzyme catalyses UDP-N-acetyl-alpha-D-glucosamine + 2 NAD(+) + H2O = UDP-2-acetamido-2-deoxy-alpha-D-glucuronate + 2 NADH + 3 H(+). The protein operates within capsule biogenesis; capsule polysaccharide biosynthesis. It participates in glycan metabolism; Vi-antigen biosynthesis. In terms of biological role, dehydrogenase required for the biosynthesis of the capsular polysaccharide, commonly referred as the Vi antigen, an important virulence factor. Catalyzes the conversion of UDP-N-acetylglucosamine (UDP-GlcNAc) to UDP-N-acetylglucosaminuronic acid (UDP-GlcNAcA). Cannot use UDP-GalNAc, UDP-Glc and UDP-Gal as substrates. The chain is UDP-N-acetyl-D-glucosamine 6-dehydrogenase from Salmonella typhi.